The primary structure comprises 1166 residues: ATP-dependent helicase/deoxyribonuclease subunit B (1166 aa).

Residues 1–278 (MGAEFLVGRS…LNLDITYKEL (278 aa)) form the UvrD-like helicase ATP-binding domain. Ser-10, Gly-11, Lys-14, Thr-15, Lys-16, Thr-236, and Arg-283 together coordinate ATP. In terms of domain architecture, UvrD-like helicase C-terminal spans 281–586 (TERHTKTPEL…TFSLIPPALD (306 aa)). The [4Fe-4S] cluster site is built by Cys-801, Cys-1121, Cys-1124, and Cys-1130.

It belongs to the helicase family. AddB/RexB type 1 subfamily. Heterodimer of AddA and AddB. The cofactor is At low magnesium concentrations there is no nuclease activity, but helicase activity is unaffected.. It depends on Mg(2+) as a cofactor. Requires [4Fe-4S] cluster as cofactor.

In terms of biological role, the heterodimer acts both as a highly processive, ATP-dependent DNA helicase and as an ATP-dependent single-stranded exonuclease, acting in both directions. Recognizes the B.subtilis Chi site (5'-AGCGG-3') which transforms the enzyme from a helicase which degrades both DNA strands to one with only 5' to 3' exonuclease activity. This generates a double-stranded DNA with a protruding 3'-terminated single-stranded tail suitable for the initiation of homologous recombination (Chi fragment). The AddB nuclease domain is not required for Chi fragment generation but for recognition of the Chi site; this subunit has 5' -&gt; 3' nuclease activity but no helicase activity. The helicase activity of isolated AddA acts on 3'-tailed substrate and requires AddB to bind to blunt-ended DNA. RecA thread formation during DNA double-strand break repair requires RecJ or AddAB. The sequence is that of ATP-dependent helicase/deoxyribonuclease subunit B from Bacillus subtilis (strain 168).